We begin with the raw amino-acid sequence, 558 residues long: Methionine--tRNA ligase 1 (558 aa).

Residues 10 to 20 carry the 'HIGH' region motif; sequence PYINGIKHLGN. Residues cysteine 142, cysteine 145, cysteine 155, and cysteine 158 each coordinate Zn(2+). The short motif at 332-336 is the 'KMSKS' region element; it reads KFSTS. Threonine 335 is an ATP binding site.

This sequence belongs to the class-I aminoacyl-tRNA synthetase family. MetG type 1 subfamily. As to quaternary structure, monomer. The cofactor is Zn(2+).

It localises to the cytoplasm. It carries out the reaction tRNA(Met) + L-methionine + ATP = L-methionyl-tRNA(Met) + AMP + diphosphate. In terms of biological role, is required not only for elongation of protein synthesis but also for the initiation of all mRNA translation through initiator tRNA(fMet) aminoacylation. This is Methionine--tRNA ligase 1 from Acaryochloris marina (strain MBIC 11017).